The chain runs to 94 residues: CRISPR-associated endoribonuclease Cas2 (94 aa).

The protein belongs to the CRISPR-associated endoribonuclease Cas2 protein family. E.coli-subtype subfamily. As to quaternary structure, homodimer. Part of the Cas1-Cas2 complex. Forms a hexamer with 2 Cas1 dimers sandwiching a Cas2 dimer. The DNA lies across a flat surface extending from 1 Cas1 dimer, across the Cas2 dimer and contacting the other Cas1 dimer. Only 1 Cas1 protein from each dimer is catalytic, the other interacts with the Cas2 dimer and possibly target DNA.

CRISPR (clustered regularly interspaced short palindromic repeat), is an adaptive immune system that provides protection against mobile genetic elements (viruses, transposable elements and conjugative plasmids). CRISPR clusters contain sequences complementary to antecedent mobile elements and target invading nucleic acids. CRISPR clusters are transcribed and processed into CRISPR RNA (crRNA). The Cas1-Cas2 complex is involved in CRISPR adaptation, the first stage of CRISPR immunity, being required for the addition/removal of CRISPR spacers at the leader end of the CRISPR locus. The Cas1-Cas2 complex introduces staggered nicks into both strands of the CRISPR array near the leader repeat and joins the 5'-ends of the repeat strands with the 3'-ends of the new spacer sequence. Spacer DNA integration requires supercoiled target DNA and 3'-OH ends on the inserted (spacer) DNA and probably initiates with a nucleophilic attack of the C 3'-OH end of the protospacer on the minus strand of the first repeat sequence. Expression of Cas1-Cas2 in a strain lacking both genes permits spacer acquisition. Cas2 not seen to bind DNA alone; the Cas1-Cas2 complex preferentially binds CRISPR-locus DNA. Highest binding is seen to a dual forked DNA complex with 3'-overhangs and a protospacer-adjacent motif-complement specifically positioned. The protospacer DNA lies across a flat surface extending from 1 Cas1 dimer, across the Cas2 dimer and contacting the other Cas1 dimer; the 23 bp-long ds section of the DNA is bracketed by 1 Tyr-22 from each of the Cas1 dimers. Cas1 cuts within the 3'-overhang, to generate a 33-nucleotide DNA that is probably incorporated into the CRISPR leader by a cut-and-paste mechanism. This subunit's probable nuclease activity is not required for spacer acquisition. The chain is CRISPR-associated endoribonuclease Cas2 (ygbF) from Escherichia coli (strain K12).